A 226-amino-acid chain; its full sequence is Triosephosphate isomerase (226 aa).

A substrate-binding site is contributed by Asn12–Lys14. Catalysis depends on His96, which acts as the Electrophile. Catalysis depends on Glu144, which acts as the Proton acceptor. Residues Ile149, Gly184, and Ala205–Ser206 each bind substrate.

The protein belongs to the triosephosphate isomerase family. In terms of assembly, homotetramer; dimer of dimers.

It is found in the cytoplasm. It carries out the reaction D-glyceraldehyde 3-phosphate = dihydroxyacetone phosphate. The protein operates within carbohydrate biosynthesis; gluconeogenesis. It participates in carbohydrate degradation; glycolysis; D-glyceraldehyde 3-phosphate from glycerone phosphate: step 1/1. Functionally, involved in the gluconeogenesis. Catalyzes stereospecifically the conversion of dihydroxyacetone phosphate (DHAP) to D-glyceraldehyde-3-phosphate (G3P). This chain is Triosephosphate isomerase, found in Thermococcus kodakarensis (strain ATCC BAA-918 / JCM 12380 / KOD1) (Pyrococcus kodakaraensis (strain KOD1)).